Here is a 358-residue protein sequence, read N- to C-terminus: MKLSSILLALAALVSPAFSYAISHLPRSEGGLDIKLTAIGNTRIKAIITNKADRPLKLLRYNNFFDDAPTQKVEIFKDGNAVQFEGIYQHIYMTDLPDEDFISLTPGESIEREVDIATTADLTQGGAFTISSQGLIPFAEVDSNEVTGAMAFHANDLEMDVDGAVAATVEKAIKPVDKRSRLTNSCTGQRRTATVRAIQASAQLSQRSAQVAQNNAQKLQEYFKQTDQRTRQLVVNRFTAVARESTVNGGRTTYDCTDRMGHCQPRTIAYTLPAQNHITNCPIFYQMPLLTNRCHGQDQATTVLHEITHNPAIVQPHCVDHGYGYQAVRRLNAQQSLQNADTYSLFANGKMTFRLFLY.

An N-terminal signal peptide occupies residues 1–19 (MKLSSILLALAALVSPAFS). A propeptide spanning residues 20–179 (YAISHLPRSE…EKAIKPVDKR (160 aa)) is cleaved from the precursor. 2 cysteine pairs are disulfide-bonded: Cys186/Cys256 and Cys263/Cys281. Residue His305 participates in Zn(2+) binding. Glu306 is a catalytic residue. Residues His309 and Asp320 each contribute to the Zn(2+) site.

Belongs to the peptidase M35 family. Zn(2+) serves as cofactor.

It is found in the secreted. The enzyme catalyses Preferential cleavage of bonds with hydrophobic residues in P1'. Also 3-Asn-|-Gln-4 and 8-Gly-|-Ser-9 bonds in insulin B chain.. Secreted metalloproteinase that allows assimilation of proteinaceous substrates. Shows high activities on basic nuclear substrates such as histone and protamine. May be involved in virulence. The polypeptide is Neutral protease 2 homolog MEP8 (MEP8) (Coccidioides posadasii (strain C735) (Valley fever fungus)).